Reading from the N-terminus, the 223-residue chain is UPF0441 protein YgiB (223 aa).

Over residues 178–195 (TVPKTAMAPKPATTTTVT) the composition is skewed to low complexity. The segment at 178–223 (TVPKTAMAPKPATTTTVTRGGFGESVAKQSTMQRSATGTSSRSMGG) is disordered. A compositionally biased stretch (polar residues) spans 204–223 (AKQSTMQRSATGTSSRSMGG).

It belongs to the UPF0441 family.

The sequence is that of UPF0441 protein YgiB from Shigella boydii serotype 18 (strain CDC 3083-94 / BS512).